A 129-amino-acid polypeptide reads, in one-letter code: Thyroid hormone receptor alpha (129 aa).

Residues 26–129 form the NR LBD domain; it reads AEWELIRMVT…EIMSLRAAVR (104 aa). 3,3',5-triiodo-L-thyronine is bound at residue R91.

Belongs to the nuclear hormone receptor family. NR1 subfamily.

It is found in the nucleus. In terms of biological role, nuclear hormone receptor that can act as a repressor or activator of transcription. High affinity receptor for thyroid hormones, including triiodothyronine and thyroxine. The protein is Thyroid hormone receptor alpha (thra1) of Sparus aurata (Gilthead sea bream).